The primary structure comprises 187 residues: dITP/XTP pyrophosphatase (187 aa).

7 to 12 serves as a coordination point for substrate; it reads TGNKHK. Positions 36 and 64 each coordinate Mg(2+). The active-site Proton acceptor is the D64. Residues A65, 140 to 143, K163, and 168 to 169 each bind substrate; these read FAFD and HR.

The protein belongs to the HAM1 NTPase family. As to quaternary structure, homodimer. It depends on Mg(2+) as a cofactor.

It catalyses the reaction XTP + H2O = XMP + diphosphate + H(+). It carries out the reaction dITP + H2O = dIMP + diphosphate + H(+). The enzyme catalyses ITP + H2O = IMP + diphosphate + H(+). In terms of biological role, pyrophosphatase that catalyzes the hydrolysis of nucleoside triphosphates to their monophosphate derivatives, with a high preference for the non-canonical purine nucleotides XTP (xanthosine triphosphate), dITP (deoxyinosine triphosphate) and ITP. Seems to function as a house-cleaning enzyme that removes non-canonical purine nucleotides from the nucleotide pool, thus preventing their incorporation into DNA/RNA and avoiding chromosomal lesions. The protein is dITP/XTP pyrophosphatase of Methanothermobacter marburgensis (strain ATCC BAA-927 / DSM 2133 / JCM 14651 / NBRC 100331 / OCM 82 / Marburg) (Methanobacterium thermoautotrophicum).